Consider the following 455-residue polypeptide: UDP-N-acetylmuramoylalanine--D-glutamate ligase (455 aa).

117-123 (GTNGKTT) is a binding site for ATP.

This sequence belongs to the MurCDEF family.

The protein resides in the cytoplasm. It catalyses the reaction UDP-N-acetyl-alpha-D-muramoyl-L-alanine + D-glutamate + ATP = UDP-N-acetyl-alpha-D-muramoyl-L-alanyl-D-glutamate + ADP + phosphate + H(+). Its pathway is cell wall biogenesis; peptidoglycan biosynthesis. In terms of biological role, cell wall formation. Catalyzes the addition of glutamate to the nucleotide precursor UDP-N-acetylmuramoyl-L-alanine (UMA). This is UDP-N-acetylmuramoylalanine--D-glutamate ligase from Pelotomaculum thermopropionicum (strain DSM 13744 / JCM 10971 / SI).